The chain runs to 296 residues: NAD kinase (296 aa).

D72 (proton acceptor) is an active-site residue. Residues 72 to 73, 146 to 147, R157, K174, D176, 187 to 192, and Q247 contribute to the NAD(+) site; these read DG, ND, and TAYALS.

This sequence belongs to the NAD kinase family. A divalent metal cation serves as cofactor.

Its subcellular location is the cytoplasm. The enzyme catalyses NAD(+) + ATP = ADP + NADP(+) + H(+). In terms of biological role, involved in the regulation of the intracellular balance of NAD and NADP, and is a key enzyme in the biosynthesis of NADP. Catalyzes specifically the phosphorylation on 2'-hydroxyl of the adenosine moiety of NAD to yield NADP. This chain is NAD kinase, found in Pseudomonas syringae pv. tomato (strain ATCC BAA-871 / DC3000).